A 137-amino-acid chain; its full sequence is Nucleoside diphosphate kinase (137 aa).

K11, F59, R87, T93, R104, and N114 together coordinate ATP. H117 functions as the Pros-phosphohistidine intermediate in the catalytic mechanism.

This sequence belongs to the NDK family. As to quaternary structure, homotetramer. It depends on Mg(2+) as a cofactor.

It localises to the cytoplasm. The enzyme catalyses a 2'-deoxyribonucleoside 5'-diphosphate + ATP = a 2'-deoxyribonucleoside 5'-triphosphate + ADP. It catalyses the reaction a ribonucleoside 5'-diphosphate + ATP = a ribonucleoside 5'-triphosphate + ADP. Functionally, major role in the synthesis of nucleoside triphosphates other than ATP. The ATP gamma phosphate is transferred to the NDP beta phosphate via a ping-pong mechanism, using a phosphorylated active-site intermediate. The chain is Nucleoside diphosphate kinase from Parafrankia sp. (strain EAN1pec).